Reading from the N-terminus, the 616-residue chain is Chaperone protein HscA (616 aa).

The protein belongs to the heat shock protein 70 family.

Functionally, chaperone involved in the maturation of iron-sulfur cluster-containing proteins. Has a low intrinsic ATPase activity which is markedly stimulated by HscB. Involved in the maturation of IscU. This is Chaperone protein HscA from Salmonella typhimurium (strain LT2 / SGSC1412 / ATCC 700720).